We begin with the raw amino-acid sequence, 396 residues long: Schizokinen exporter SchE (396 aa).

Positions 1–25 (MLPKLILLATLYISQFIPTTFFIQA) are cleaved as a signal peptide. The Cytoplasmic portion of the chain corresponds to 26 to 39 (LPVFMRQQKMSLDV). The helical transmembrane segment at 40–60 (IGFLGLLILPSGLKFLWSPFI) threads the bilayer. Residues 61–73 (DRYRLGKLGHYRG) lie on the Periplasmic side of the membrane. Residues 74–94 (WIICFQLLLISTMLVTAFIDI) traverse the membrane as a helical segment. The Cytoplasmic portion of the chain corresponds to 95–104 (QDNLNAFLTC). A helical transmembrane segment spans residues 105-127 (MFLASLFSSSQDIATDALAVNLL). The Periplasmic segment spans residues 128–137 (EPQERGLGNA). The helical transmembrane segment at 138–158 (IQSGGNIFGAIIGGGVMLILL) threads the bilayer. Residues 159 to 162 (DKIG) are Cytoplasmic-facing. Residues 163-183 (WRYSLITLSIFMLINLVPILI) form a helical membrane-spanning segment. The Periplasmic portion of the chain corresponds to 184–214 (YREKSQHQLENSTFFRSYFQPFISFLSRPKA). The chain crosses the membrane as a helical span at residues 215–235 (LPWLFVVLLYMMGDSVTSLMI). Residues 236–251 (RPLLVDRGLSLPDIGW) are Cytoplasmic-facing. Residues 252-272 (ILGIVSYSARIVSALIAGLVI) form a helical membrane-spanning segment. Residues 273 to 281 (VKLGRIKSL) are Periplasmic-facing. The chain crosses the membrane as a helical span at residues 282-302 (IIFGFIADLTTLLYIIPAIGV). Over 303-304 (SS) the chain is Cytoplasmic. Residues 305–325 (LLVLYTVCIIVNATQSMAYTA) form a helical membrane-spanning segment. Residues 326-346 (LLSAMMDKCEKNTAATDYTMQ) are Periplasmic-facing. 2 helical membrane passes run 347-367 (VSVM…LATT) and 368-388 (MGYS…VFLI). Residues 389–396 (TQEYGVSS) lie on the Periplasmic side of the membrane.

Belongs to the major facilitator superfamily.

The protein resides in the cell inner membrane. In terms of biological role, involved in the TolC-like protein HgdD-dependent secretion of schizokinen, a dihydroxamate-type siderophore. Transports schizokinen from the cytoplasm to the periplasm. This chain is Schizokinen exporter SchE, found in Nostoc sp. (strain PCC 7120 / SAG 25.82 / UTEX 2576).